The following is a 433-amino-acid chain: Amino-acid acetyltransferase (433 aa).

Residues 287 to 426 (ELVREAAIED…ASLYNYQRNS (140 aa)) enclose the N-acetyltransferase domain.

Belongs to the acetyltransferase family. ArgA subfamily.

The protein localises to the cytoplasm. The enzyme catalyses L-glutamate + acetyl-CoA = N-acetyl-L-glutamate + CoA + H(+). The protein operates within amino-acid biosynthesis; L-arginine biosynthesis; N(2)-acetyl-L-ornithine from L-glutamate: step 1/4. The protein is Amino-acid acetyltransferase of Pseudomonas fluorescens (strain SBW25).